Consider the following 597-residue polypeptide: Myrcene synthase, chloroplastic (597 aa).

The transit peptide at 1–56 (MALKLLTSLPMYNFSRVPVSSKDPILLVTSRTRNGYLARPVQCMVANKVSTSPDIL) directs the protein to the chloroplast. (2E)-geranyl diphosphate is bound by residues Arg310, Asp347, Asp351, Arg488, and Asp491. The Mg(2+) site is built by Asp347 and Asp351. Positions 347 to 351 (DDVYD) match the DDXXD motif motif. The Mg(2+) site is built by Asp491, Thr495, and Glu499.

Belongs to the terpene synthase family. Tpsb subfamily. Mg(2+) is required as a cofactor. Requires Mn(2+) as cofactor.

The protein resides in the plastid. It localises to the chloroplast. The catalysed reaction is (2E)-geranyl diphosphate = beta-myrcene + diphosphate. Functionally, involved in monoterpene (C10) biosynthesis. The major product is myrcene followed by minor amounts (1.2%) of the cyclic monoterpene limonene. The protein is Myrcene synthase, chloroplastic of Quercus ilex (Holly oak).